A 572-amino-acid chain; its full sequence is Proline dehydrogenase 1, mitochondrial (572 aa).

The span at 105–124 (NHSNQTNNVNNKNYNNNNNN) shows a compositional bias: low complexity. Residues 105 to 140 (NHSNQTNNVNNKNYNNNNNNFEKDDKFGPPNNQNNN) form a disordered region.

It belongs to the proline oxidase family. Requires FAD as cofactor.

The protein resides in the mitochondrion matrix. The enzyme catalyses L-proline + a quinone = (S)-1-pyrroline-5-carboxylate + a quinol + H(+). Its pathway is amino-acid degradation; L-proline degradation into L-glutamate; L-glutamate from L-proline: step 1/2. Functionally, converts proline to delta-1-pyrroline-5-carboxylate. The polypeptide is Proline dehydrogenase 1, mitochondrial (prodh) (Dictyostelium discoideum (Social amoeba)).